The following is a 422-amino-acid chain: UDP-N-acetylglucosamine 1-carboxyvinyltransferase (422 aa).

Lysine 22–asparagine 23 lines the phosphoenolpyruvate pocket. UDP-N-acetyl-alpha-D-glucosamine is bound at residue arginine 92. The Proton donor role is filled by cysteine 116. The residue at position 116 (cysteine 116) is a 2-(S-cysteinyl)pyruvic acid O-phosphothioketal. UDP-N-acetyl-alpha-D-glucosamine is bound by residues arginine 121 to leucine 125, aspartate 307, and leucine 329.

It belongs to the EPSP synthase family. MurA subfamily.

It is found in the cytoplasm. The enzyme catalyses phosphoenolpyruvate + UDP-N-acetyl-alpha-D-glucosamine = UDP-N-acetyl-3-O-(1-carboxyvinyl)-alpha-D-glucosamine + phosphate. The protein operates within cell wall biogenesis; peptidoglycan biosynthesis. Its function is as follows. Cell wall formation. Adds enolpyruvyl to UDP-N-acetylglucosamine. The protein is UDP-N-acetylglucosamine 1-carboxyvinyltransferase of Aliarcobacter butzleri (strain RM4018) (Arcobacter butzleri).